We begin with the raw amino-acid sequence, 167 residues long: Small ribosomal subunit protein uS5 (167 aa).

An S5 DRBM domain is found at 12 to 75 (IEDRVVAINR…ETARKSLIEV (64 aa)).

It belongs to the universal ribosomal protein uS5 family. Part of the 30S ribosomal subunit. Contacts proteins S4 and S8.

Functionally, with S4 and S12 plays an important role in translational accuracy. Its function is as follows. Located at the back of the 30S subunit body where it stabilizes the conformation of the head with respect to the body. This Pediococcus pentosaceus (strain ATCC 25745 / CCUG 21536 / LMG 10740 / 183-1w) protein is Small ribosomal subunit protein uS5.